The chain runs to 495 residues: MPWFKNLIKISKTITNQSSSYKSITPLASPLLTQFLQFTKQYSTNDHVVGLEATKSDQKPRIVVLGSGWAGCRLMKDIDTNIYDVVCVSPRNHMVFTPLLASTCVGTLEFRSVAEPIGRIQPAVSTQPASYFFLANCNAIDFDNHMIECETVTEGVETLEAWKFNVSYDKLVIASGAHALTFGIKGVNEHATFLREVHHAQEIRRKLLLNLMLSDVPGVSEEEKRRLLHCVVVGGGPTGVEFSGELSDFILKDVHQRYAHVKDYIHVTLIEANEILSSFDDRLRVYATNQLTKSGVRLVRGLVQHVQPDNIILSDGTNVPYGLLVWSTGVGPSPFVNSLDIPKAKGRIGIDEWLRVPSVQDVYSIGDCSGFLESTGRQVLPALAQVAERQGKYLASLLNKVGKQGGGHANCAQNINLGDPFVYKHLGSMATIGRYKALVDLRESKEAKGVSLAGFTSFFVWRSAYLTRVVSWRNKIYVLINWLTTLVFGRDISRI.

The transit peptide at 1–41 (MPWFKNLIKISKTITNQSSSYKSITPLASPLLTQFLQFTKQ) directs the protein to the mitochondrion. 61–91 (RIVVLGSGWAGCRLMKDIDTNIYDVVCVSPR) provides a ligand contact to FAD. An NAD(+)-binding site is contributed by 228–264 (LHCVVVGGGPTGVEFSGELSDFILKDVHQRYAHVKDY). Positions 486–495 (LVFGRDISRI) match the Microbody targeting signal motif.

Belongs to the NADH dehydrogenase family. It depends on FAD as a cofactor.

Its subcellular location is the mitochondrion inner membrane. The protein resides in the peroxisome. It catalyses the reaction a quinone + NADH + H(+) = a quinol + NAD(+). The enzyme catalyses a ubiquinone + NADH + H(+) = a ubiquinol + NAD(+). Functionally, alternative NADH-ubiquinone oxidoreductase which catalyzes the oxidation of mitochondrial NADH does not translocate protons across the inner mitochondrial membrane. In Solanum tuberosum (Potato), this protein is Internal alternative NAD(P)H-ubiquinone oxidoreductase A1, mitochondrial (NDA1).